Here is a 308-residue protein sequence, read N- to C-terminus: Ribonuclease HIII (308 aa).

In terms of domain architecture, RNase H type-2 spans 93–308 (MSVLGSDETG…ANTEKARKMI (216 aa)). The a divalent metal cation site is built by D99, E100, and D204.

It belongs to the RNase HII family. RnhC subfamily. It depends on Mn(2+) as a cofactor. The cofactor is Mg(2+).

The protein resides in the cytoplasm. The catalysed reaction is Endonucleolytic cleavage to 5'-phosphomonoester.. Endonuclease that specifically degrades the RNA of RNA-DNA hybrids. This Lysinibacillus sphaericus (strain C3-41) protein is Ribonuclease HIII.